Consider the following 657-residue polypeptide: Glycogen debranching enzyme (657 aa).

D336 serves as the catalytic Nucleophile. The active-site Proton donor is E371. The segment covering 458 to 467 has biased composition (basic and acidic residues); that stretch reads NEANGEENRD. Residues 458-479 form a disordered region; sequence NEANGEENRDGTNNNYSNNHGK.

Belongs to the glycosyl hydrolase 13 family.

The enzyme catalyses Hydrolysis of (1-&gt;6)-alpha-D-glucosidic linkages to branches with degrees of polymerization of three or four glucose residues in limit dextrin.. It functions in the pathway glycan degradation; glycogen degradation. Removes maltotriose and maltotetraose chains that are attached by 1,6-alpha-linkage to the limit dextrin main chain, generating a debranched limit dextrin. The chain is Glycogen debranching enzyme from Shigella sonnei (strain Ss046).